We begin with the raw amino-acid sequence, 545 residues long: CTP synthase (545 aa).

Positions 1–266 (MTTNYIFVTG…DDYICKRFSL (266 aa)) are amidoligase domain. S14 contributes to the CTP binding site. A UTP-binding site is contributed by S14. ATP contacts are provided by residues 15–20 (SLGKGI) and D72. Mg(2+) is bound by residues D72 and E140. Residues 147–149 (DIE), 187–192 (KTKPTQ), and K223 contribute to the CTP site. UTP contacts are provided by residues 187–192 (KTKPTQ) and K223. 239 to 241 (KDV) is an ATP binding site. The Glutamine amidotransferase type-1 domain occupies 291-542 (TIGMVGKYIE…VKAANEHQKR (252 aa)). G352 contributes to the L-glutamine binding site. C379 acts as the Nucleophile; for glutamine hydrolysis in catalysis. Residues 380 to 383 (LGMQ), E403, and R470 each bind L-glutamine. Residues H515 and E517 contribute to the active site.

Belongs to the CTP synthase family. Homotetramer.

It catalyses the reaction UTP + L-glutamine + ATP + H2O = CTP + L-glutamate + ADP + phosphate + 2 H(+). The enzyme catalyses L-glutamine + H2O = L-glutamate + NH4(+). The catalysed reaction is UTP + NH4(+) + ATP = CTP + ADP + phosphate + 2 H(+). Its pathway is pyrimidine metabolism; CTP biosynthesis via de novo pathway; CTP from UDP: step 2/2. With respect to regulation, allosterically activated by GTP, when glutamine is the substrate; GTP has no effect on the reaction when ammonia is the substrate. The allosteric effector GTP functions by stabilizing the protein conformation that binds the tetrahedral intermediate(s) formed during glutamine hydrolysis. Inhibited by the product CTP, via allosteric rather than competitive inhibition. In terms of biological role, catalyzes the ATP-dependent amination of UTP to CTP with either L-glutamine or ammonia as the source of nitrogen. Regulates intracellular CTP levels through interactions with the four ribonucleotide triphosphates. This is CTP synthase from Salmonella paratyphi A (strain ATCC 9150 / SARB42).